The primary structure comprises 539 residues: Chaperonin GroEL (539 aa).

ATP is bound by residues 29-32 (TLGP), 86-90 (DGTTT), Gly-413, 477-479 (NAA), and Asp-493.

The protein belongs to the chaperonin (HSP60) family. Forms a cylinder of 14 subunits composed of two heptameric rings stacked back-to-back. Interacts with the co-chaperonin GroES.

The protein resides in the cytoplasm. It catalyses the reaction ATP + H2O + a folded polypeptide = ADP + phosphate + an unfolded polypeptide.. Together with its co-chaperonin GroES, plays an essential role in assisting protein folding. The GroEL-GroES system forms a nano-cage that allows encapsulation of the non-native substrate proteins and provides a physical environment optimized to promote and accelerate protein folding. This is Chaperonin GroEL from Leifsonia xyli subsp. xyli (strain CTCB07).